The primary structure comprises 418 residues: Vacuole membrane protein HFL1 (418 aa).

At Met-1 to Leu-5 the chain is on the extracellular side. The helical transmembrane segment at Leu-6–Phe-26 threads the bilayer. Residues Tyr-27 to Arg-43 lie on the Cytoplasmic side of the membrane. A helical transmembrane segment spans residues Leu-44–Ile-64. The Extracellular portion of the chain corresponds to Lys-65–Glu-78. A helical transmembrane segment spans residues Phe-79–Glu-99. The Cytoplasmic segment spans residues Arg-100 to Gly-141. The chain crosses the membrane as a helical span at residues Ile-142–Trp-162. Over Lys-163–Glu-168 the chain is Extracellular. The chain crosses the membrane as a helical span at residues Ile-169 to Phe-189. The Cytoplasmic portion of the chain corresponds to Trp-190–Lys-205. A helical transmembrane segment spans residues Phe-206–Leu-226. Residues Val-227–Lys-246 are Extracellular-facing. Residues Asn-247–Trp-267 traverse the membrane as a helical segment. At Asn-268–Cys-418 the chain is on the cytoplasmic side. Positions Arg-379–Ser-402 are ATG8-interacting region.

This sequence belongs to the TMEM184 family. In terms of assembly, interacts with ATG8.

It localises to the vacuole membrane. Functionally, vacuole membrane protein that recruits ATG8 to facilitate the degradation of vacuolar integral membrane proteins during early-stationary vacuole turnover (EVT) when cells enter stationary phase. The polypeptide is Vacuole membrane protein HFL1 (Saccharomyces cerevisiae (strain ATCC 204508 / S288c) (Baker's yeast)).